The following is a 128-amino-acid chain: Small ribosomal subunit protein uS12 (128 aa).

The segment at 1–25 is disordered; it reads MPTIQQLIRRGRKTKASKTASPALE. Asp-89 carries the post-translational modification 3-methylthioaspartic acid. Residues 101–128 form a disordered region; it reads SLDTSGVADRRNSRSKYGAKRPKEAAAK.

This sequence belongs to the universal ribosomal protein uS12 family. In terms of assembly, part of the 30S ribosomal subunit. Contacts proteins S8 and S17. May interact with IF1 in the 30S initiation complex.

With S4 and S5 plays an important role in translational accuracy. In terms of biological role, interacts with and stabilizes bases of the 16S rRNA that are involved in tRNA selection in the A site and with the mRNA backbone. Located at the interface of the 30S and 50S subunits, it traverses the body of the 30S subunit contacting proteins on the other side and probably holding the rRNA structure together. The combined cluster of proteins S8, S12 and S17 appears to hold together the shoulder and platform of the 30S subunit. The protein is Small ribosomal subunit protein uS12 of Chlorobium phaeobacteroides (strain BS1).